A 126-amino-acid polypeptide reads, in one-letter code: Fluoride-specific ion channel FluC (126 aa).

4 helical membrane-spanning segments follow: residues 4–24, 38–58, 71–91, and 104–124; these read FAILGFIALGGAFGACSRYLV, YGTLTVNVVGSFIMGLLIAAF, IIGLGFLGALTTFSTFSMDNV, and LNVVLNVTLSITAAWVGFQLL. Na(+)-binding residues include G78 and T81.

This sequence belongs to the fluoride channel Fluc/FEX (TC 1.A.43) family.

Its subcellular location is the cell inner membrane. It catalyses the reaction fluoride(in) = fluoride(out). Its activity is regulated as follows. Na(+) is not transported, but it plays an essential structural role and its presence is essential for fluoride channel function. Its function is as follows. Fluoride-specific ion channel. Important for reducing fluoride concentration in the cell, thus reducing its toxicity. The chain is Fluoride-specific ion channel FluC from Vibrio vulnificus (strain CMCP6).